Consider the following 748-residue polypeptide: Cysteine--tRNA ligase, cytoplasmic (748 aa).

Residues 1–25 (MAAAPAEQGKGKRVQPPWSPPEGTK) form a disordered region. Cys-55 is a binding site for Zn(2+). Gly-56 provides a ligand contact to L-cysteine. The short motif at 57–67 (PTVYDASHMGH) is the 'HIGH' region element. Thr-96 is an L-cysteine binding site. The 'KIIK' region signature appears at 101–104 (KIIK). Zn(2+) is bound by residues Cys-348, His-373, and Glu-377. His-373 contacts L-cysteine. The short motif at 406 to 410 (KMSKS) is the 'KMSKS' region element. Lys-409 is a binding site for ATP. 2 stretches are compositionally biased toward basic and acidic residues: residues 656–679 (KIEE…EAAK) and 686–717 (PPHE…KELS). Positions 656–719 (KIEEEKKRKK…DTEGKELSKG (64 aa)) are disordered.

Belongs to the class-I aminoacyl-tRNA synthetase family. Homodimer. Requires Zn(2+) as cofactor.

The protein resides in the cytoplasm. It carries out the reaction tRNA(Cys) + L-cysteine + ATP = L-cysteinyl-tRNA(Cys) + AMP + diphosphate. Functionally, catalyzes the ATP-dependent ligation of cysteine to tRNA(Cys). The chain is Cysteine--tRNA ligase, cytoplasmic (CARS1) from Gallus gallus (Chicken).